A 697-amino-acid polypeptide reads, in one-letter code: DNA ligase (697 aa).

Residues 41–45 (DPVYD), 90–91 (SL), and Glu129 contribute to the NAD(+) site. The active-site N6-AMP-lysine intermediate is Lys131. NAD(+) contacts are provided by Arg152, Glu189, Lys308, and Lys332. Positions 426, 429, 444, and 449 each coordinate Zn(2+). Positions 617–697 (AANHHLTGST…ALQNMLRGST (81 aa)) constitute a BRCT domain.

This sequence belongs to the NAD-dependent DNA ligase family. LigA subfamily. The cofactor is Mg(2+). It depends on Mn(2+) as a cofactor.

The catalysed reaction is NAD(+) + (deoxyribonucleotide)n-3'-hydroxyl + 5'-phospho-(deoxyribonucleotide)m = (deoxyribonucleotide)n+m + AMP + beta-nicotinamide D-nucleotide.. Its function is as follows. DNA ligase that catalyzes the formation of phosphodiester linkages between 5'-phosphoryl and 3'-hydroxyl groups in double-stranded DNA using NAD as a coenzyme and as the energy source for the reaction. It is essential for DNA replication and repair of damaged DNA. This chain is DNA ligase, found in Synechococcus sp. (strain CC9311).